A 142-amino-acid polypeptide reads, in one-letter code: Ribosome-binding factor A (142 aa).

Residues 118–142 (DKNGDAEVDDTQVDDEPSVDSEKGE) form a disordered region. A compositionally biased stretch (acidic residues) spans 123–136 (AEVDDTQVDDEPSV).

It belongs to the RbfA family. As to quaternary structure, monomer. Binds 30S ribosomal subunits, but not 50S ribosomal subunits or 70S ribosomes.

It localises to the cytoplasm. Its function is as follows. One of several proteins that assist in the late maturation steps of the functional core of the 30S ribosomal subunit. Associates with free 30S ribosomal subunits (but not with 30S subunits that are part of 70S ribosomes or polysomes). Required for efficient processing of 16S rRNA. May interact with the 5'-terminal helix region of 16S rRNA. The chain is Ribosome-binding factor A from Colwellia psychrerythraea (strain 34H / ATCC BAA-681) (Vibrio psychroerythus).